The primary structure comprises 346 residues: Holliday junction branch migration complex subunit RuvB (346 aa).

The span at 1 to 16 (MSDADRLITPEKRGED) shows a compositional bias: basic and acidic residues. The tract at residues 1 to 23 (MSDADRLITPEKRGEDIDTTLRP) is disordered. The large ATPase domain (RuvB-L) stretch occupies residues 1-182 (MSDADRLITP…FGIPVRLAFY (182 aa)). ATP-binding positions include Leu-21, Arg-22, Gly-63, Lys-66, Thr-67, Thr-68, 129–131 (EDF), Arg-172, Tyr-182, and Arg-219. Mg(2+) is bound at residue Thr-67. A small ATPAse domain (RuvB-S) region spans residues 183-253 (TVDELELIVR…IADEALTRLL (71 aa)). The interval 256–346 (NMGLDQLDMR…AQFRLTLEDD (91 aa)) is head domain (RuvB-H). Residues Arg-292, Arg-311, and Arg-316 each contribute to the DNA site.

Belongs to the RuvB family. Homohexamer. Forms an RuvA(8)-RuvB(12)-Holliday junction (HJ) complex. HJ DNA is sandwiched between 2 RuvA tetramers; dsDNA enters through RuvA and exits via RuvB. An RuvB hexamer assembles on each DNA strand where it exits the tetramer. Each RuvB hexamer is contacted by two RuvA subunits (via domain III) on 2 adjacent RuvB subunits; this complex drives branch migration. In the full resolvosome a probable DNA-RuvA(4)-RuvB(12)-RuvC(2) complex forms which resolves the HJ.

The protein localises to the cytoplasm. It catalyses the reaction ATP + H2O = ADP + phosphate + H(+). In terms of biological role, the RuvA-RuvB-RuvC complex processes Holliday junction (HJ) DNA during genetic recombination and DNA repair, while the RuvA-RuvB complex plays an important role in the rescue of blocked DNA replication forks via replication fork reversal (RFR). RuvA specifically binds to HJ cruciform DNA, conferring on it an open structure. The RuvB hexamer acts as an ATP-dependent pump, pulling dsDNA into and through the RuvAB complex. RuvB forms 2 homohexamers on either side of HJ DNA bound by 1 or 2 RuvA tetramers; 4 subunits per hexamer contact DNA at a time. Coordinated motions by a converter formed by DNA-disengaged RuvB subunits stimulates ATP hydrolysis and nucleotide exchange. Immobilization of the converter enables RuvB to convert the ATP-contained energy into a lever motion, pulling 2 nucleotides of DNA out of the RuvA tetramer per ATP hydrolyzed, thus driving DNA branch migration. The RuvB motors rotate together with the DNA substrate, which together with the progressing nucleotide cycle form the mechanistic basis for DNA recombination by continuous HJ branch migration. Branch migration allows RuvC to scan DNA until it finds its consensus sequence, where it cleaves and resolves cruciform DNA. The protein is Holliday junction branch migration complex subunit RuvB of Agrobacterium fabrum (strain C58 / ATCC 33970) (Agrobacterium tumefaciens (strain C58)).